The chain runs to 290 residues: ADP-dependent (S)-NAD(P)H-hydrate dehydratase (290 aa).

Residues 5-278 (NQTLLEKVII…RYLPKIMKII (274 aa)) enclose the YjeF C-terminal domain. (6S)-NADPHX contacts are provided by A40, G103, and H152. G218 is a binding site for AMP. A (6S)-NADPHX-binding site is contributed by D219.

It belongs to the NnrD/CARKD family. Homotetramer. Requires Mg(2+) as cofactor.

The catalysed reaction is (6S)-NADHX + ADP = AMP + phosphate + NADH + H(+). It catalyses the reaction (6S)-NADPHX + ADP = AMP + phosphate + NADPH + H(+). Functionally, catalyzes the dehydration of the S-form of NAD(P)HX at the expense of ADP, which is converted to AMP. Together with NAD(P)HX epimerase, which catalyzes the epimerization of the S- and R-forms, the enzyme allows the repair of both epimers of NAD(P)HX, a damaged form of NAD(P)H that is a result of enzymatic or heat-dependent hydration. The polypeptide is ADP-dependent (S)-NAD(P)H-hydrate dehydratase (Streptococcus pneumoniae (strain ATCC BAA-255 / R6)).